Consider the following 268-residue polypeptide: 14-3-3-like protein GF14 upsilon (268 aa).

Serine 69 and serine 192 each carry phosphoserine. Threonine 213 is subject to Phosphothreonine. The tract at residues glutamate 243–glutamine 268 is disordered. A compositionally biased stretch (basic and acidic residues) spans aspartate 246–glutamate 260. Phosphoserine is present on serine 267.

It belongs to the 14-3-3 family. Interacts with EDE1. Interacts with DREB1A and DREB1B in the nucleus. Interacts with CINV1.

Its subcellular location is the cytoplasm. It is found in the nucleus. In terms of biological role, is associated with a DNA binding complex that binds to the G box, a well-characterized cis-acting DNA regulatory element found in plant genes. May be involved in cell cycle regulation by binding to soluble EDE1 and sequestering it in an inactive form during the early stages of mitosis. The chain is 14-3-3-like protein GF14 upsilon (GRF5) from Arabidopsis thaliana (Mouse-ear cress).